Consider the following 244-residue polypeptide: MTAYLLHDELIFPHPEYADPDGLLAIGGDLSPDRLILAYKSGIFPWYNHKPILWWSPSKRPLIFPRLFKMSRSLYQTLKKDIYRVSFDKDFVTVIKGCATAPRKDSTGTWITEEMIEAYTLLHKLGFAHSVEVWFNDKIVGGLYGISIGRAFFGESMFTLMKDASKVAISCLVEHLILNNFYFIDCQITNKHLIRLGAYEIPRSVFLILLKEAVQKETLTNKWDRDFEFTSKTAKFLKEKLIPR.

The protein belongs to the L/F-transferase family.

The protein localises to the cytoplasm. The catalysed reaction is N-terminal L-lysyl-[protein] + L-leucyl-tRNA(Leu) = N-terminal L-leucyl-L-lysyl-[protein] + tRNA(Leu) + H(+). It carries out the reaction N-terminal L-arginyl-[protein] + L-leucyl-tRNA(Leu) = N-terminal L-leucyl-L-arginyl-[protein] + tRNA(Leu) + H(+). The enzyme catalyses L-phenylalanyl-tRNA(Phe) + an N-terminal L-alpha-aminoacyl-[protein] = an N-terminal L-phenylalanyl-L-alpha-aminoacyl-[protein] + tRNA(Phe). In terms of biological role, functions in the N-end rule pathway of protein degradation where it conjugates Leu, Phe and, less efficiently, Met from aminoacyl-tRNAs to the N-termini of proteins containing an N-terminal arginine or lysine. The polypeptide is Leucyl/phenylalanyl-tRNA--protein transferase (Thermodesulfovibrio yellowstonii (strain ATCC 51303 / DSM 11347 / YP87)).